We begin with the raw amino-acid sequence, 37 residues long: Large ribosomal subunit protein bL36c (37 aa).

The protein belongs to the bacterial ribosomal protein bL36 family.

It localises to the plastid. Its subcellular location is the chloroplast. The protein is Large ribosomal subunit protein bL36c of Chloranthus spicatus (Chulantree).